The chain runs to 150 residues: uncharacterized protein (150 aa).

This is an uncharacterized protein from Homo sapiens (Human).